Here is a 469-residue protein sequence, read N- to C-terminus: 3-isopropylmalate dehydratase large subunit (469 aa).

Cys-349, Cys-409, and Cys-412 together coordinate [4Fe-4S] cluster.

Belongs to the aconitase/IPM isomerase family. LeuC type 1 subfamily. In terms of assembly, heterodimer of LeuC and LeuD. [4Fe-4S] cluster is required as a cofactor.

The catalysed reaction is (2R,3S)-3-isopropylmalate = (2S)-2-isopropylmalate. Its pathway is amino-acid biosynthesis; L-leucine biosynthesis; L-leucine from 3-methyl-2-oxobutanoate: step 2/4. In terms of biological role, catalyzes the isomerization between 2-isopropylmalate and 3-isopropylmalate, via the formation of 2-isopropylmaleate. The sequence is that of 3-isopropylmalate dehydratase large subunit from Methylorubrum extorquens (strain CM4 / NCIMB 13688) (Methylobacterium extorquens).